Consider the following 126-residue polypeptide: Glycine cleavage system H protein (126 aa).

A Lipoyl-binding domain is found at 22–104 (VATIGITEYA…YEKAWMVKVE (83 aa)). Lysine 63 is modified (N6-lipoyllysine).

It belongs to the GcvH family. The glycine cleavage system is composed of four proteins: P, T, L and H. (R)-lipoate is required as a cofactor.

In terms of biological role, the glycine cleavage system catalyzes the degradation of glycine. The H protein shuttles the methylamine group of glycine from the P protein to the T protein. Functionally, is also involved in protein lipoylation via its role as an octanoyl/lipoyl carrier protein intermediate. This chain is Glycine cleavage system H protein, found in Staphylococcus aureus (strain JH1).